The primary structure comprises 146 residues: Hemoglobin subunit beta (146 aa).

Valine 1 is modified (N-acetylvaline). Residues 2 to 146 (HLTAEEKAAV…VATALAHKYH (145 aa)) form the Globin domain. Residue threonine 12 is modified to Phosphothreonine. Position 44 is a phosphoserine (serine 44). Lysine 59 bears the N6-acetyllysine mark. Histidine 63 is a binding site for heme b. Lysine 82 carries the post-translational modification N6-acetyllysine. Histidine 92 lines the heme b pocket. An S-nitrosocysteine modification is found at cysteine 93. Lysine 144 carries the N6-acetyllysine modification.

Belongs to the globin family. As to quaternary structure, heterotetramer of two alpha chains and two beta chains. As to expression, red blood cells.

Involved in oxygen transport from the lung to the various peripheral tissues. This chain is Hemoglobin subunit beta (HBB), found in Mustela lutreola (European mink).